A 126-amino-acid polypeptide reads, in one-letter code: Glycine cleavage system H protein (126 aa).

The region spanning 24-105 is the Lipoyl-binding domain; the sequence is TLTVGITDHA…AYGVWLFKIK (82 aa). An N6-lipoyllysine modification is found at Lys65.

It belongs to the GcvH family. As to quaternary structure, the glycine cleavage system is composed of four proteins: P, T, L and H. It depends on (R)-lipoate as a cofactor.

In terms of biological role, the glycine cleavage system catalyzes the degradation of glycine. The H protein shuttles the methylamine group of glycine from the P protein to the T protein. This chain is Glycine cleavage system H protein, found in Burkholderia cenocepacia (strain HI2424).